A 556-amino-acid polypeptide reads, in one-letter code: Pumilio homolog 11 (556 aa).

In terms of domain architecture, PUM-HD spans 215 to 556 (GGSRELDGSA…RIFSKNLWKK (342 aa)). 8 Pumilio repeats span residues 238 to 276 (SMVD…IIFK), 277 to 313 (EVIN…ILIR), 316 to 351 (SKPG…SLVK), 353 to 388 (ALVP…FILE), 389 to 424 (AATK…KLVD), 425 to 459 (EISR…VLFE), 460 to 495 (LRGN…VNEL), and 496 to 531 (VSVL…SLVE).

It is found in the cytoplasm. Its function is as follows. Sequence-specific RNA-binding protein that regulates translation and mRNA stability by binding the 3'-UTR of target mRNAs. This is Pumilio homolog 11 (APUM11) from Arabidopsis thaliana (Mouse-ear cress).